A 311-amino-acid chain; its full sequence is 4-hydroxy-tetrahydrodipicolinate synthase (311 aa).

T49 provides a ligand contact to pyruvate. Y138 acts as the Proton donor/acceptor in catalysis. The active-site Schiff-base intermediate with substrate is the K166. Pyruvate is bound at residue I207.

It belongs to the DapA family. As to quaternary structure, homotetramer; dimer of dimers.

The protein localises to the cytoplasm. It catalyses the reaction L-aspartate 4-semialdehyde + pyruvate = (2S,4S)-4-hydroxy-2,3,4,5-tetrahydrodipicolinate + H2O + H(+). It participates in amino-acid biosynthesis; L-lysine biosynthesis via DAP pathway; (S)-tetrahydrodipicolinate from L-aspartate: step 3/4. Catalyzes the condensation of (S)-aspartate-beta-semialdehyde [(S)-ASA] and pyruvate to 4-hydroxy-tetrahydrodipicolinate (HTPA). This is 4-hydroxy-tetrahydrodipicolinate synthase from Lactobacillus acidophilus (strain ATCC 700396 / NCK56 / N2 / NCFM).